The chain runs to 173 residues: Mediator of RNA polymerase II transcription subunit 19 (173 aa).

The tract at residues 139-173 (LMRGDDMSENDEFGARRSKRKKKAQNGTDSKRQHI) is disordered.

The protein belongs to the Mediator complex subunit 19 family. As to quaternary structure, component of the Mediator complex.

It is found in the nucleus. Its function is as follows. Component of the Mediator complex, a coactivator involved in the regulated transcription of nearly all RNA polymerase II-dependent genes. Mediator functions as a bridge to convey information from gene-specific regulatory proteins to the basal RNA polymerase II transcription machinery. Mediator is recruited to promoters by direct interactions with regulatory proteins and serves as a scaffold for the assembly of a functional preinitiation complex with RNA polymerase II and the general transcription factors. The polypeptide is Mediator of RNA polymerase II transcription subunit 19 (ROX3) (Scheffersomyces stipitis (strain ATCC 58785 / CBS 6054 / NBRC 10063 / NRRL Y-11545) (Yeast)).